The sequence spans 259 residues: Trypsin (259 aa).

The first 32 residues, 1-32 (MKHFLRALKRCSVAVATVAIAVVGLQPVTASA), serve as a signal peptide directing secretion. Positions 33–36 (APNP) are cleaved as a propeptide — activation peptide. In terms of domain architecture, Peptidase S1 spans 37–257 (VVGGTRAAQG…FASAIASAAR (221 aa)). A disulfide bond links cysteine 58 and cysteine 74. Residues histidine 73 and aspartate 118 each act as charge relay system in the active site. Intrachain disulfides connect cysteine 177–cysteine 192 and cysteine 204–cysteine 233. Serine 208 acts as the Charge relay system in catalysis.

Belongs to the peptidase S1 family.

It carries out the reaction Preferential cleavage: Arg-|-Xaa, Lys-|-Xaa.. The polypeptide is Trypsin (sprT) (Streptomyces griseus).